A 320-amino-acid polypeptide reads, in one-letter code: Ferrochelatase (320 aa).

Residues His194 and Glu275 each contribute to the Fe cation site.

The protein belongs to the ferrochelatase family.

It localises to the cytoplasm. It catalyses the reaction heme b + 2 H(+) = protoporphyrin IX + Fe(2+). It participates in porphyrin-containing compound metabolism; protoheme biosynthesis; protoheme from protoporphyrin-IX: step 1/1. Functionally, catalyzes the ferrous insertion into protoporphyrin IX. The sequence is that of Ferrochelatase from Klebsiella pneumoniae (strain 342).